Consider the following 105-residue polypeptide: Large ribosomal subunit protein eL42 (105 aa).

Residues 28 to 57 (YKKGKDSLAAQGKRRYDRKQSGYGGQTKPV) form a disordered region.

This sequence belongs to the eukaryotic ribosomal protein eL42 family.

The sequence is that of Large ribosomal subunit protein eL42 (RPL44) from Gossypium hirsutum (Upland cotton).